A 476-amino-acid chain; its full sequence is Membrane-bound lytic murein transglycosylase F (476 aa).

Positions 1–22 are cleaved as a signal peptide; it reads MTRFLFALILGFLLTACQQVTV. The tract at residues 23–257 is non-LT domain; that stretch reads DETEFVPKKL…HLNEKYFGHV (235 aa). Positions 258-476 are LT domain; sequence KRFDYVDTRA…AGTLSPEQPK (219 aa). Glu-302 is a catalytic residue. A disordered region spans residues 446 to 476; that stretch reads SKQQNPEEEPSDLASEEPAIPAGTLSPEQPK. Acidic residues predominate over residues 451–460; the sequence is PEEEPSDLAS.

This sequence in the N-terminal section; belongs to the bacterial solute-binding protein 3 family. The protein in the C-terminal section; belongs to the transglycosylase Slt family.

The protein localises to the cell outer membrane. The catalysed reaction is Exolytic cleavage of the (1-&gt;4)-beta-glycosidic linkage between N-acetylmuramic acid (MurNAc) and N-acetylglucosamine (GlcNAc) residues in peptidoglycan, from either the reducing or the non-reducing ends of the peptidoglycan chains, with concomitant formation of a 1,6-anhydrobond in the MurNAc residue.. Functionally, murein-degrading enzyme that degrades murein glycan strands and insoluble, high-molecular weight murein sacculi, with the concomitant formation of a 1,6-anhydromuramoyl product. Lytic transglycosylases (LTs) play an integral role in the metabolism of the peptidoglycan (PG) sacculus. Their lytic action creates space within the PG sacculus to allow for its expansion as well as for the insertion of various structures such as secretion systems and flagella. This chain is Membrane-bound lytic murein transglycosylase F, found in Shewanella baltica (strain OS155 / ATCC BAA-1091).